Reading from the N-terminus, the 608-residue chain is Signal transduction histidine-protein kinase AtoS (608 aa).

The Cytoplasmic portion of the chain corresponds to 1–15 (MHYMKWIYPRRLRNQ). The chain crosses the membrane as a helical span at residues 16-36 (MILMAILMVIVPTLTIGYIVE). The Periplasmic portion of the chain corresponds to 37-189 (TEGRSAVLSE…DIRRQAWKMD (153 aa)). A helical transmembrane segment spans residues 190–210 (VRIIIVLTAGLLISLLLIVLF). The Cytoplasmic segment spans residues 211-608 (SRRLSANIDI…PINPQGNQTV (398 aa)). The 51-residue stretch at 212 to 262 (RRLSANIDIITDGLSTLAQNIPTRLPQLPGEMGQISQSVNNLAQALRETRT) folds into the HAMP domain. A PAS domain is found at 260–305 (TRTLNDLIIENAADGVIAIDRQGDVTTMNPAAEVITGYQRHELVGQ). One can recognise a PAC domain in the interval 326–382 (HGTEHVALEISFPGRDRTIELSVTTSRIHNTHGEMIGALVIFSDLTARKETQRRMAQ). The Histidine kinase domain occupies 395–602 (GVAHEVRNPL…TFTLILPINP (208 aa)). Residue H398 is modified to Phosphohistidine; by autocatalysis.

In terms of assembly, homodimer. In terms of processing, autophosphorylated. Each AtoS molecule may phosphorylate its partner within the dimer rather than phosphorylating itself.

The protein resides in the cell inner membrane. The catalysed reaction is ATP + protein L-histidine = ADP + protein N-phospho-L-histidine.. Its function is as follows. Member of the two-component regulatory system AtoS/AtoC. In the presence of acetoacetate, AtoS/AtoC stimulates the expression of the atoDAEB operon, leading to short chain fatty acid catabolism and activation of the poly-(R)-3-hydroxybutyrate (cPHB) biosynthetic pathway. Also induces the operon in response to spermidine. Involved in the regulation of motility and chemotaxis, via transcriptional induction of the flagellar regulon. AtoS is a membrane-associated kinase that phosphorylates and activates AtoC in response to environmental signals. The sequence is that of Signal transduction histidine-protein kinase AtoS (atoS) from Escherichia coli (strain K12).